A 274-amino-acid polypeptide reads, in one-letter code: 4-diphosphocytidyl-2-C-methyl-D-erythritol kinase (274 aa).

Lysine 10 is an active-site residue. Proline 101–alanine 111 lines the ATP pocket. Residue aspartate 143 is part of the active site.

This sequence belongs to the GHMP kinase family. IspE subfamily.

It carries out the reaction 4-CDP-2-C-methyl-D-erythritol + ATP = 4-CDP-2-C-methyl-D-erythritol 2-phosphate + ADP + H(+). The protein operates within isoprenoid biosynthesis; isopentenyl diphosphate biosynthesis via DXP pathway; isopentenyl diphosphate from 1-deoxy-D-xylulose 5-phosphate: step 3/6. In terms of biological role, catalyzes the phosphorylation of the position 2 hydroxy group of 4-diphosphocytidyl-2C-methyl-D-erythritol. This Helicobacter pylori (strain HPAG1) protein is 4-diphosphocytidyl-2-C-methyl-D-erythritol kinase.